Here is a 414-residue protein sequence, read N- to C-terminus: Nucleoredoxin (414 aa).

The Thioredoxin domain occupies 131–305; sequence LLVKDDPEGL…ELNAVQLNEG (175 aa).

Belongs to the nucleoredoxin family.

It is found in the cytoplasm. Its subcellular location is the cytosol. It localises to the nucleus. It catalyses the reaction [protein]-dithiol + NAD(+) = [protein]-disulfide + NADH + H(+). It carries out the reaction [protein]-dithiol + NADP(+) = [protein]-disulfide + NADPH + H(+). Its function is as follows. Functions as a redox-dependent negative regulator of the Wnt signaling pathway. The chain is Nucleoredoxin (nxn) from Xenopus laevis (African clawed frog).